A 122-amino-acid polypeptide reads, in one-letter code: Urease subunit beta (122 aa).

The protein belongs to the urease beta subunit family. Heterotrimer of UreA (gamma), UreB (beta) and UreC (alpha) subunits. Three heterotrimers associate to form the active enzyme.

The protein localises to the cytoplasm. The enzyme catalyses urea + 2 H2O + H(+) = hydrogencarbonate + 2 NH4(+). Its pathway is nitrogen metabolism; urea degradation; CO(2) and NH(3) from urea (urease route): step 1/1. This chain is Urease subunit beta, found in Lysinibacillus sphaericus (strain C3-41).